Consider the following 47-residue polypeptide: Delta-actitoxin-Aspp1b (47 aa).

Intrachain disulfides connect cysteine 4–cysteine 44, cysteine 6–cysteine 34, and cysteine 27–cysteine 45.

This sequence belongs to the sea anemone sodium channel inhibitory toxin family. Type I subfamily.

It is found in the secreted. Its subcellular location is the nematocyst. Its function is as follows. Binds specifically to voltage-gated sodium channels (Nav), thereby delaying their inactivation during signal transduction. Has a longer mammalian heart stimulation effect than Hk2a, Hk8a and Hk16a. The polypeptide is Delta-actitoxin-Aspp1b (Anthopleura sp. (strain 'Zhanjiang') (Sea anemone)).